A 608-amino-acid polypeptide reads, in one-letter code: MFDSKAFLKNVPHDPGVYRMFDKTDTVIYVGKAKDLKKRLSSYFRPNLSSKKTEALVASITRIETTITTSETEALLLEHNYIKTFQPRYNVLLRDDKSYPYILLTKERHPRIAAYRGAKKIQGEYFGPYPHAGAVRETLSLLQKLFPIRQCENSVYKNRSRPCLQYQIGRCCAPCVAGYVTDEEYQAQVEYARLFLQGKDQQVLDHLIAKMETASRALDFENAARFRDQIQAVRAVIEKQFVSNDRLDDMDIISIAYRHGVACVQVLFIRQGKVLGNRSYFPKVPANTDLSELTATFVGQFYLQAHQGRTVPNSIVVDHKLEAKEEIEQLLSEQAGRKVSIQDNAKGSKSKYLSLAQMNAKAALTLKLKESTLISERYRALRELLDMDKINRMECFDISHTMGEQTIASCVVFNDAGPFKSEYRRFNIEGITGGDDYAAMEQALKKRYDRDLTPEKIPDIIFIDGGKGQLNRALKAFGELNVKWDKNRPHLIGIAKGVDRRAGQETLILSKTGREVNLDPDNLALHLIQHIRDESHNHAISGHRKKRQKAFTQSGLETIEGVGPKRRQALLKYLGGMQGVKNATLEEIASVPGISRALAEIIFETLKH.

Residues 13–91 form the GIY-YIG domain; it reads HDPGVYRMFD…IKTFQPRYNV (79 aa). Residues 201 to 236 form the UVR domain; that stretch reads QQVLDHLIAKMETASRALDFENAARFRDQIQAVRAV.

It belongs to the UvrC family. As to quaternary structure, interacts with UvrB in an incision complex.

It is found in the cytoplasm. Its function is as follows. The UvrABC repair system catalyzes the recognition and processing of DNA lesions. UvrC both incises the 5' and 3' sides of the lesion. The N-terminal half is responsible for the 3' incision and the C-terminal half is responsible for the 5' incision. In Actinobacillus succinogenes (strain ATCC 55618 / DSM 22257 / CCUG 43843 / 130Z), this protein is UvrABC system protein C.